The following is a 37-amino-acid chain: Large ribosomal subunit protein bL36 (37 aa).

Belongs to the bacterial ribosomal protein bL36 family.

The chain is Large ribosomal subunit protein bL36 from Methylibium petroleiphilum (strain ATCC BAA-1232 / LMG 22953 / PM1).